We begin with the raw amino-acid sequence, 638 residues long: Probable inactive receptor kinase At4g23740 (638 aa).

A signal peptide spans Met-1 to Ser-24. LRR repeat units lie at residues Ala-94 to Lys-117, Asp-118 to Val-139, Asn-142 to Lys-165, Arg-166 to Ser-188, and Ser-189 to Asn-198. Residues Val-257–Leu-277 form a helical membrane-spanning segment. The region spanning Arg-337–Val-608 is the Protein kinase domain. Ser-339 is subject to Phosphoserine. Leu-343–Thr-351 contacts ATP. Thr-360 bears the Phosphothreonine mark. Lys-365 lines the ATP pocket. Phosphoserine occurs at positions 416 and 419. Thr-436 and Thr-509 each carry phosphothreonine. Residue Ser-513 is modified to Phosphoserine. A disordered region spans residues Arg-612–Ile-638. A compositionally biased stretch (basic and acidic residues) spans Thr-613 to Ser-625. Residues Asn-627 to Ile-638 are compositionally biased toward polar residues.

The protein belongs to the protein kinase superfamily.

The protein resides in the membrane. This Arabidopsis thaliana (Mouse-ear cress) protein is Probable inactive receptor kinase At4g23740.